Here is a 283-residue protein sequence, read N- to C-terminus: Pantothenate synthetase (283 aa).

Residue 30–37 (MGNLHAGH) participates in ATP binding. Catalysis depends on His-37, which acts as the Proton donor. Residue Gln-61 participates in (R)-pantoate binding. A beta-alanine-binding site is contributed by Gln-61. Residue 149–152 (GEKD) coordinates ATP. (R)-pantoate is bound at residue Gln-155. ATP is bound by residues Leu-178 and 186 to 189 (MSSR).

This sequence belongs to the pantothenate synthetase family. Homodimer.

It is found in the cytoplasm. It carries out the reaction (R)-pantoate + beta-alanine + ATP = (R)-pantothenate + AMP + diphosphate + H(+). The protein operates within cofactor biosynthesis; (R)-pantothenate biosynthesis; (R)-pantothenate from (R)-pantoate and beta-alanine: step 1/1. Its function is as follows. Catalyzes the condensation of pantoate with beta-alanine in an ATP-dependent reaction via a pantoyl-adenylate intermediate. The polypeptide is Pantothenate synthetase (Hahella chejuensis (strain KCTC 2396)).